We begin with the raw amino-acid sequence, 291 residues long: MVREQYTTTTEGTHIQRPENQCVYKIGIYGWRKRCLYLFVLLLLIILLVNFALTIWILKVMWFSPTGMGHLRVTKDGLRLEGESEFLFPLYAKEIHSRVDSSLLLQSTQNVTVNARNSEGEVTGRLKVGPKMVEVQSQQFQINSKDGKPLFTVDEKEVVVGTDKLRVTGPEGALFEHSVETPLVRADPFQDLRLESPTRSLSMDAPKGVHIKAHAGKIEALSQMDIIFQSSDGMLVLDAETVCLPKLVQGTQGPAGSSQRLYEICVCPDGKLYLSVAGVGTTCHEHSHICL.

The helical; Signal-anchor for type II membrane protein transmembrane segment at 38 to 58 threads the bilayer; that stretch reads LFVLLLLIILLVNFALTIWIL. Over 59–291 the chain is Extracellular; the sequence is KVMWFSPTGM…TCHEHSHICL (233 aa). N-linked (GlcNAc...) asparagine glycosylation is present at asparagine 110. Disulfide bonds link cysteine 265/cysteine 290 and cysteine 267/cysteine 283.

It belongs to the sarcoglycan beta/delta/gamma/zeta family. Interacts with the syntrophin SNTA1. Cross-link to form 2 major subcomplexes: one consisting of SGCB, SGCD and SGCG and the other consisting of SGCB and SGCD. The association between SGCB and SGCG is particularly strong while SGCA is loosely associated with the other sarcoglycans. Interacts with FLNC. Post-translationally, disulfide bonds are present.

It is found in the cell membrane. It localises to the sarcolemma. Its subcellular location is the cytoplasm. The protein resides in the cytoskeleton. Functionally, component of the sarcoglycan complex, a subcomplex of the dystrophin-glycoprotein complex which forms a link between the F-actin cytoskeleton and the extracellular matrix. This is Gamma-sarcoglycan (SGCG) from Canis lupus familiaris (Dog).